Consider the following 616-residue polypeptide: Dihydroxy-acid dehydratase (616 aa).

A Mg(2+)-binding site is contributed by aspartate 81. Position 122 (cysteine 122) interacts with [2Fe-2S] cluster. Residues aspartate 123 and lysine 124 each contribute to the Mg(2+) site. Lysine 124 bears the N6-carboxylysine mark. Position 195 (cysteine 195) interacts with [2Fe-2S] cluster. Glutamate 491 contacts Mg(2+). Serine 517 serves as the catalytic Proton acceptor.

The protein belongs to the IlvD/Edd family. As to quaternary structure, homodimer. Requires [2Fe-2S] cluster as cofactor. The cofactor is Mg(2+).

The enzyme catalyses (2R)-2,3-dihydroxy-3-methylbutanoate = 3-methyl-2-oxobutanoate + H2O. It catalyses the reaction (2R,3R)-2,3-dihydroxy-3-methylpentanoate = (S)-3-methyl-2-oxopentanoate + H2O. It functions in the pathway amino-acid biosynthesis; L-isoleucine biosynthesis; L-isoleucine from 2-oxobutanoate: step 3/4. It participates in amino-acid biosynthesis; L-valine biosynthesis; L-valine from pyruvate: step 3/4. Functionally, functions in the biosynthesis of branched-chain amino acids. Catalyzes the dehydration of (2R,3R)-2,3-dihydroxy-3-methylpentanoate (2,3-dihydroxy-3-methylvalerate) into 2-oxo-3-methylpentanoate (2-oxo-3-methylvalerate) and of (2R)-2,3-dihydroxy-3-methylbutanoate (2,3-dihydroxyisovalerate) into 2-oxo-3-methylbutanoate (2-oxoisovalerate), the penultimate precursor to L-isoleucine and L-valine, respectively. This Escherichia coli O17:K52:H18 (strain UMN026 / ExPEC) protein is Dihydroxy-acid dehydratase.